Reading from the N-terminus, the 482-residue chain is Probable F-box protein At1g30780 (482 aa).

Residues 230-280 (EIDLDSLPFDLKMVILTRLSAKSLTNFKRVSKMWSSIIGSQRFIDSFFTMS) enclose the F-box domain.

The polypeptide is Probable F-box protein At1g30780 (Arabidopsis thaliana (Mouse-ear cress)).